We begin with the raw amino-acid sequence, 174 residues long: Balbiani ring protein 1 (174 aa).

Positions 28–174 are disordered; sequence KCRCTSAGKP…RPEGCGSAMR (147 aa). Repeat copies occupy residues 42-52, 53-63, 64-74, 75-85, 124-134, 135-145, 146-156, and 157-167. 4 X 11 AA tandem repeats stretches follow at residues 42 to 85 and 124 to 167; these read EPSK…PRPE. 2 stretches are compositionally biased toward basic and acidic residues: residues 49–100 and 121–159; these read PRPE…EKCA and RKSE…EKPS.

Salivary gland.

Its subcellular location is the secreted. Functionally, used by the larvae to construct a supramolecular structure, the larval tube. This is Balbiani ring protein 1 (BR1) from Chironomus tentans (Midge).